The following is a 452-amino-acid chain: uncharacterized protein (452 aa).

It localises to the cytoplasm. The protein resides in the nucleus. This is an uncharacterized protein from Schizosaccharomyces pombe (strain 972 / ATCC 24843) (Fission yeast).